The following is a 271-amino-acid chain: Plasmanylethanolamine desaturase 1 (271 aa).

The next 3 membrane-spanning stretches (helical) occupy residues 48-68 (WCCV…LLLL), 75-95 (PLVM…SGLV), and 162-182 (VLEQ…FGTF). Positions 187–191 (HKWSH) match the Histidine box-1 motif. The short motif at 214–218 (HHRIH) is the Histidine box-2 element.

It belongs to the fatty acid desaturase CarF family.

The protein localises to the endoplasmic reticulum membrane. It carries out the reaction a 1-(1,2-saturated alkyl)-2-acyl-sn-glycero-3-phosphoethanolamine + 2 Fe(II)-[cytochrome b5] + O2 + 2 H(+) = a 1-O-(1Z-alkenyl)-2-acyl-sn-glycero-3-phosphoethanolamine + 2 Fe(III)-[cytochrome b5] + 2 H2O. The enzyme catalyses a 1-O-hexadecyl-2-acyl-sn-glycero-3-phosphoethanolamine + 2 Fe(II)-[cytochrome b5] + O2 + 2 H(+) = a 1-O-(1Z-hexadecenyl)-2-acyl-sn-glycero-3-phosphoethanolamine + 2 Fe(III)-[cytochrome b5] + 2 H2O. The catalysed reaction is a 1-O-octadecyl-2-acyl-sn-glycero-3-phosphoethanolamine + 2 Fe(II)-[cytochrome b5] + O2 + 2 H(+) = a 1-O-(1Z-octadecenyl)-2-acyl-sn-glycero-3-phosphoethanolamine + 2 Fe(III)-[cytochrome b5] + 2 H2O. It catalyses the reaction a 1-O-(9Z-octadecenyl)-2-acyl-sn-glycero-3-phosphoethanolamine + 2 Fe(II)-[cytochrome b5] + O2 + 2 H(+) = a 1-O-(1Z,9Z-octadecadienyl)-2-acyl-sn-glycero-3-phosphoethanolamine + 2 Fe(III)-[cytochrome b5] + 2 H2O. Its pathway is lipid metabolism; fatty acid metabolism. In terms of biological role, plasmanylethanolamine desaturase involved in plasmalogen biogenesis in the endoplasmic reticulum membrane. Plasmalogens are glycerophospholipids with a hydrocarbon chain linked by a vinyl ether bond at the glycerol sn-1 position, and are involved in antioxidative and signaling mechanisms. In Bos taurus (Bovine), this protein is Plasmanylethanolamine desaturase 1.